The primary structure comprises 203 residues: ATP phosphoribosyltransferase (203 aa).

The protein belongs to the ATP phosphoribosyltransferase family. Short subfamily. As to quaternary structure, heteromultimer composed of HisG and HisZ subunits.

It is found in the cytoplasm. It carries out the reaction 1-(5-phospho-beta-D-ribosyl)-ATP + diphosphate = 5-phospho-alpha-D-ribose 1-diphosphate + ATP. The protein operates within amino-acid biosynthesis; L-histidine biosynthesis; L-histidine from 5-phospho-alpha-D-ribose 1-diphosphate: step 1/9. Functionally, catalyzes the condensation of ATP and 5-phosphoribose 1-diphosphate to form N'-(5'-phosphoribosyl)-ATP (PR-ATP). Has a crucial role in the pathway because the rate of histidine biosynthesis seems to be controlled primarily by regulation of HisG enzymatic activity. This chain is ATP phosphoribosyltransferase, found in Campylobacter fetus subsp. fetus (strain 82-40).